The sequence spans 503 residues: Glycerol kinase (503 aa).

Threonine 17 contributes to the ADP binding site. Threonine 17, threonine 18, and serine 19 together coordinate ATP. Threonine 17 lines the sn-glycerol 3-phosphate pocket. An ADP-binding site is contributed by arginine 21. 4 residues coordinate sn-glycerol 3-phosphate: arginine 87, glutamate 88, tyrosine 141, and aspartate 245. Residues arginine 87, glutamate 88, tyrosine 141, aspartate 245, and glutamine 246 each coordinate glycerol. Residues threonine 267 and glycine 310 each coordinate ADP. 4 residues coordinate ATP: threonine 267, glycine 310, glutamine 314, and glycine 411. Glycine 411 and asparagine 415 together coordinate ADP.

Belongs to the FGGY kinase family.

The enzyme catalyses glycerol + ATP = sn-glycerol 3-phosphate + ADP + H(+). Its pathway is polyol metabolism; glycerol degradation via glycerol kinase pathway; sn-glycerol 3-phosphate from glycerol: step 1/1. With respect to regulation, inhibited by fructose 1,6-bisphosphate (FBP). Functionally, key enzyme in the regulation of glycerol uptake and metabolism. Catalyzes the phosphorylation of glycerol to yield sn-glycerol 3-phosphate. This is Glycerol kinase from Pseudomonas tolaasii.